The sequence spans 79 residues: Ubiquinol-cytochrome c reductase complex assembly factor 5 (79 aa).

Topologically, residues 1-20 are mitochondrial matrix; that stretch reads MSPYSGSVRRLLDSWPGKKR. The helical transmembrane segment at 21–43 threads the bilayer; it reads FGVYRFLPLFFLLGAGLEFSMIN. At 44–79 the chain is on the mitochondrial intermembrane side; it reads WTVGETNFYRTFKRRQAKNYVEEQQHLQARAANNTN.

This sequence belongs to the UQCC5 family. In terms of assembly, interacts with respiratory complex III components Uqcc1 and RFeSP; the interactions are probably involved in the assembly and stability of the mitochondrial ubiquinol-cytochrome c reductase complex. Interacts with sloth2; the interaction stabilizes both components. Expressed in the brain.

The protein resides in the mitochondrion inner membrane. The protein localises to the mitochondrion. Its function is as follows. Required for the assembly and stability of the mitochondrial ubiquinol-cytochrome c reductase complex (complex III (CIII) or cytochrome b-c1 complex), a multisubunit transmembrane complex that is part of the mitochondrial electron transport chain (ETC) which drives oxidative phosphorylation. The protein is Ubiquinol-cytochrome c reductase complex assembly factor 5 of Drosophila melanogaster (Fruit fly).